Consider the following 248-residue polypeptide: Phosphoribosylaminoimidazole-succinocarboxamide synthase (248 aa).

Belongs to the SAICAR synthetase family.

It catalyses the reaction 5-amino-1-(5-phospho-D-ribosyl)imidazole-4-carboxylate + L-aspartate + ATP = (2S)-2-[5-amino-1-(5-phospho-beta-D-ribosyl)imidazole-4-carboxamido]succinate + ADP + phosphate + 2 H(+). Its pathway is purine metabolism; IMP biosynthesis via de novo pathway; 5-amino-1-(5-phospho-D-ribosyl)imidazole-4-carboxamide from 5-amino-1-(5-phospho-D-ribosyl)imidazole-4-carboxylate: step 1/2. This is Phosphoribosylaminoimidazole-succinocarboxamide synthase (purC) from Methanothermobacter thermautotrophicus (strain ATCC 29096 / DSM 1053 / JCM 10044 / NBRC 100330 / Delta H) (Methanobacterium thermoautotrophicum).